The primary structure comprises 756 residues: U3 small nucleolar RNA-associated protein 14 homolog B (756 aa).

Residues 21-44 are disordered; the sequence is DLPENYPLSTSEDEGDSDGEGKRQ. 3 positions are modified to phosphoserine: Ser29, Ser31, and Ser37. Coiled coils occupy residues 215-244 and 316-345; these read SLEE…RREK and PEAR…SEEE. 2 stretches are compositionally biased toward basic and acidic residues: residues 419 to 428 and 452 to 468; these read KERSFQERVD and LNKE…SSEE. Disordered regions lie at residues 419–468 and 497–539; these read KERS…SSEE and QQGE…KKKK. Positions 449–476 form a coiled coil; the sequence is LQKLNKESHQSDNQKVSSEENVLHIQRE. Ser554 is modified (phosphoserine).

The protein belongs to the UTP14 family. As to expression, expressed predominantly in germ cells of the testis; weakly expressed in brain.

It localises to the nucleus. Its subcellular location is the nucleolus. Its function is as follows. Essential for spermatogenesis. May be required specifically for ribosome biogenesis and hence protein synthesis during male meiosis. The polypeptide is U3 small nucleolar RNA-associated protein 14 homolog B (Utp14b) (Mus musculus (Mouse)).